The primary structure comprises 416 residues: Gamma-glutamyl phosphate reductase (416 aa).

The protein belongs to the gamma-glutamyl phosphate reductase family.

The protein localises to the cytoplasm. It catalyses the reaction L-glutamate 5-semialdehyde + phosphate + NADP(+) = L-glutamyl 5-phosphate + NADPH + H(+). The protein operates within amino-acid biosynthesis; L-proline biosynthesis; L-glutamate 5-semialdehyde from L-glutamate: step 2/2. Catalyzes the NADPH-dependent reduction of L-glutamate 5-phosphate into L-glutamate 5-semialdehyde and phosphate. The product spontaneously undergoes cyclization to form 1-pyrroline-5-carboxylate. This is Gamma-glutamyl phosphate reductase from Vibrio atlanticus (strain LGP32) (Vibrio splendidus (strain Mel32)).